The primary structure comprises 125 residues: Oxytocin-neurophysin 1 (125 aa).

Positions 1–19 are cleaved as a signal peptide; it reads MAGSSLACCLLGLLALTSA. An intrachain disulfide couples Cys-20 to Cys-25. Gly-28 carries the post-translational modification Glycine amide. Cystine bridges form between Cys-41–Cys-85, Cys-44–Cys-58, Cys-52–Cys-75, Cys-59–Cys-65, Cys-92–Cys-104, Cys-98–Cys-116, and Cys-105–Cys-110.

The protein belongs to the vasopressin/oxytocin family. As to quaternary structure, interacts with oxytocin receptor (Ki=1.5 nM). Interacts with vasopressin V1aR/AVPR1A (Ki=37 nM), V1bR/AVPR1B (Ki=222 nM), and V2R/AVPR2 receptors (Ki=823 nM).

It is found in the secreted. In terms of biological role, neurophysin 1 specifically binds oxytocin. Functionally, oxytocin causes contraction of the smooth muscle of the uterus and of the mammary gland. Acts by binding to oxytocin receptor (OXTR). The polypeptide is Oxytocin-neurophysin 1 (OXT) (Bos taurus (Bovine)).